A 421-amino-acid polypeptide reads, in one-letter code: WD repeat and SOCS box-containing protein 1 (421 aa).

6 WD repeats span residues 32–71 (KCGRENWTVAFAPDGSYFAWSQGHRTVKLVPWSQCLQNFL), 124–165 (SRCV…LLLN), 168–208 (DHTE…NMMK), 212–251 (GHQNWVYSCAFSPDSSMLCSVGASKAVFLWNMDKYTMIRK), 254–293 (GHHHDVVACDFSPDGALLATASYDTRVYIWDPHNGDILME), and 309–346 (ANDRWVRSVSFSHDGLHVASLADDKMVRFWRIDEDYPV). In terms of domain architecture, SOCS box spans 372–421 (DGSVYFWATPRQVPSLQHLCRMSIRRVMPTQEVQELPIPSKLLEFLSYRI).

Interacts with DIO2. Component of the probable ECS(WSB1) E3 ubiquitin ligase complex which contains CUL5, RNF7/RBX2, Elongin BC complex and WSB1. Component of a probable ECS-like E3 ubiquitin-protein ligase complex which contains CUL5, RBX1, Elongin BC complex and WSB1. Interacts with CUL5, RNF7, ELOB and ELOC. Binds to HIPK2 through WD40 repeats.

Its pathway is protein modification; protein ubiquitination. Its function is as follows. Probable substrate-recognition component of a SCF-like ECS (Elongin-Cullin-SOCS-box protein) E3 ubiquitin ligase complex which mediates the ubiquitination and subsequent proteasomal degradation of target proteins. Recognizes type II iodothyronine deiodinase/DIO2. Confers constitutive instability to HIPK2 through proteasomal degradation. This Homo sapiens (Human) protein is WD repeat and SOCS box-containing protein 1 (WSB1).